A 364-amino-acid chain; its full sequence is UDP-N-acetylglucosamine--N-acetylmuramyl-(pentapeptide) pyrophosphoryl-undecaprenol N-acetylglucosamine transferase 1 (364 aa).

Residues 10-12, Asn124, Ser195, Ile250, and Gln295 each bind UDP-N-acetyl-alpha-D-glucosamine; that span reads TGG.

It belongs to the glycosyltransferase 28 family. MurG subfamily.

Its subcellular location is the cell membrane. The enzyme catalyses di-trans,octa-cis-undecaprenyl diphospho-N-acetyl-alpha-D-muramoyl-L-alanyl-D-glutamyl-meso-2,6-diaminopimeloyl-D-alanyl-D-alanine + UDP-N-acetyl-alpha-D-glucosamine = di-trans,octa-cis-undecaprenyl diphospho-[N-acetyl-alpha-D-glucosaminyl-(1-&gt;4)]-N-acetyl-alpha-D-muramoyl-L-alanyl-D-glutamyl-meso-2,6-diaminopimeloyl-D-alanyl-D-alanine + UDP + H(+). Its pathway is cell wall biogenesis; peptidoglycan biosynthesis. Functionally, cell wall formation. Catalyzes the transfer of a GlcNAc subunit on undecaprenyl-pyrophosphoryl-MurNAc-pentapeptide (lipid intermediate I) to form undecaprenyl-pyrophosphoryl-MurNAc-(pentapeptide)GlcNAc (lipid intermediate II). This is UDP-N-acetylglucosamine--N-acetylmuramyl-(pentapeptide) pyrophosphoryl-undecaprenol N-acetylglucosamine transferase 1 from Bacillus cereus (strain ATCC 10987 / NRS 248).